The following is a 154-amino-acid chain: Large ribosomal subunit protein uL13 (154 aa).

Belongs to the universal ribosomal protein uL13 family. As to quaternary structure, part of the 50S ribosomal subunit.

Its function is as follows. This protein is one of the early assembly proteins of the 50S ribosomal subunit, although it is not seen to bind rRNA by itself. It is important during the early stages of 50S assembly. The polypeptide is Large ribosomal subunit protein uL13 (Brucella anthropi (strain ATCC 49188 / DSM 6882 / CCUG 24695 / JCM 21032 / LMG 3331 / NBRC 15819 / NCTC 12168 / Alc 37) (Ochrobactrum anthropi)).